A 576-amino-acid polypeptide reads, in one-letter code: Proline--tRNA ligase (576 aa).

This sequence belongs to the class-II aminoacyl-tRNA synthetase family. ProS type 1 subfamily. Homodimer.

It localises to the cytoplasm. The catalysed reaction is tRNA(Pro) + L-proline + ATP = L-prolyl-tRNA(Pro) + AMP + diphosphate. Its function is as follows. Catalyzes the attachment of proline to tRNA(Pro) in a two-step reaction: proline is first activated by ATP to form Pro-AMP and then transferred to the acceptor end of tRNA(Pro). As ProRS can inadvertently accommodate and process non-cognate amino acids such as alanine and cysteine, to avoid such errors it has two additional distinct editing activities against alanine. One activity is designated as 'pretransfer' editing and involves the tRNA(Pro)-independent hydrolysis of activated Ala-AMP. The other activity is designated 'posttransfer' editing and involves deacylation of mischarged Ala-tRNA(Pro). The misacylated Cys-tRNA(Pro) is not edited by ProRS. This is Proline--tRNA ligase from Leptospira borgpetersenii serovar Hardjo-bovis (strain JB197).